The sequence spans 126 residues: Small ribosomal subunit protein uS13 (126 aa).

A disordered region spans residues 98-126; the sequence is PVRGQSTKNNARTRKGRKKTVANKKKATK. The segment covering 108–126 has biased composition (basic residues); the sequence is ARTRKGRKKTVANKKKATK.

This sequence belongs to the universal ribosomal protein uS13 family. Part of the 30S ribosomal subunit. Forms a loose heterodimer with protein S19. Forms two bridges to the 50S subunit in the 70S ribosome.

Located at the top of the head of the 30S subunit, it contacts several helices of the 16S rRNA. In the 70S ribosome it contacts the 23S rRNA (bridge B1a) and protein L5 of the 50S subunit (bridge B1b), connecting the 2 subunits; these bridges are implicated in subunit movement. Contacts the tRNAs in the A and P-sites. This is Small ribosomal subunit protein uS13 from Bacteroides fragilis (strain ATCC 25285 / DSM 2151 / CCUG 4856 / JCM 11019 / LMG 10263 / NCTC 9343 / Onslow / VPI 2553 / EN-2).